Here is a 286-residue protein sequence, read N- to C-terminus: Ribosome maturation factor RimP (286 aa).

Acidic residues predominate over residues 200 to 224 (LDGEDGDDTGVDAGDPDQDDADDAL). The interval 200–286 (LDGEDGDDTG…ANASTVKETH (87 aa)) is disordered. The span at 248 to 267 (VGRKAKGKKASPKKSNAKKK) shows a compositional bias: basic residues. A compositionally biased stretch (polar residues) spans 273–286 (AASSANASTVKETH).

Belongs to the RimP family.

It is found in the cytoplasm. In terms of biological role, required for maturation of 30S ribosomal subunits. The chain is Ribosome maturation factor RimP from Xanthobacter autotrophicus (strain ATCC BAA-1158 / Py2).